We begin with the raw amino-acid sequence, 437 residues long: tRNA-2-methylthio-N(6)-dimethylallyladenosine synthase (437 aa).

Positions 1-115 (MKVYIETMGC…ISQVIHKEKA (115 aa)) constitute an MTTase N-terminal domain. Cys10, Cys46, Cys78, Cys148, Cys152, and Cys155 together coordinate [4Fe-4S] cluster. A Radical SAM core domain is found at 134–367 (KKAQIRSLLN…QNRHKEILEE (234 aa)). Residues 370-436 (KLEVGKTHVV…KGRLIAAIKG (67 aa)) form the TRAM domain.

Belongs to the methylthiotransferase family. MiaB subfamily. In terms of assembly, monomer. [4Fe-4S] cluster is required as a cofactor.

It localises to the cytoplasm. The enzyme catalyses N(6)-dimethylallyladenosine(37) in tRNA + (sulfur carrier)-SH + AH2 + 2 S-adenosyl-L-methionine = 2-methylsulfanyl-N(6)-dimethylallyladenosine(37) in tRNA + (sulfur carrier)-H + 5'-deoxyadenosine + L-methionine + A + S-adenosyl-L-homocysteine + 2 H(+). Functionally, catalyzes the methylthiolation of N6-(dimethylallyl)adenosine (i(6)A), leading to the formation of 2-methylthio-N6-(dimethylallyl)adenosine (ms(2)i(6)A) at position 37 in tRNAs that read codons beginning with uridine. The sequence is that of tRNA-2-methylthio-N(6)-dimethylallyladenosine synthase from Helicobacter pylori (strain P12).